The following is a 1255-amino-acid chain: MFPFQPMYPMQPMPYRNPFAAPRRPWFPRTDPFLAMQVQELTRSMANLTFKQRRDAPPEGPPAKKPKREAPQKQKGGGQGKKKKNQGKKKAKTGPPNPKAQSGNKKKPNKKPGKRQRMVMKLESDKTFPIMLEGKINGYACVVGGKLFRPMHVEGKIDNDVLAALKTKKASKYDLEYADVPQNMRADTFKYTHEKPQGYYSWHHGAVQYENGRFTVPKGVGAKGDSGRPILDNQGRVVAIVLGGVNEGSRTALSVVMWNEKGVTVKYTPENCEQWSLVTTMCLLANVTFPCAEPPICYDRKPAETLAMLSVNVDNPGYDELLEAAVKCPGRKRRSTEELFKEYKLTRPYMARCIRCAVGSCHSPIAIEAVKSDGHDGYVRLQTSSQYGLDSSGNLKGRTMRYDMHGTIEEIPLHQVSLHTSRPCHIVDGHGYFLLARCPAGDSITMEFKKGSVTHSCSVPYEVKFNPVGRELYTHPPEHGAEQACQVYAHDAQNRGAYVEMHLPGSEVDSSLISLSGSSVTVTPPVGTSALVKCKCGGTKISETINKAKQFSQCTKKEQCRAYRLQNDKWVYNSDKLPKAAGATLKGKLHVPFLLADGKCTVPLAPEPMITFGFRSVSLKLHPKNPTYLTTRQLADEPHYTHELISEPAVRNFTVTEKGWEFVWGNHPPKRFWAQETAPGNPHGLPHEVITHYYHRYPMSTILGLSICAAIVTVSVAASTWLFCKSRVSCLTPYRLTPNARMPLCLAVLCCARTARAETTWESLDHLWNNNQQMFWIQLLIPLAALIVVTRLLKCVCCVVPFLVVAGAAGAGAYEHATTMPSQAGISYNTIVNRAGYAPLPISITPTKIKLIPTVNLEYVTCHYKTGMDSPAIKCCGSQECTPTNRPDEQCKVFTGVYPFMWGGAYCFCDTENTQVSKAYVMKSDDCLADHAEAYKAHTASVQAFLNITVGEHSIVTTVYVNGETPVNFNGVKLTAGPLSTAWTPFDRKIVQYAGEIYNYDFPEYGAGQPGAFGDIQSRTVSSSDLYANTNLVLQRPKAGAIHVPYTQAPSGFEQWKKDKAPSLKFTAPFGCEIYTNPIRAENCAVGSIPLAFDIPDALFTRVSETPTLSAAECTLNECVYSSDFGGIATVKYSASKSGKCAVHVPSGTATLKEAAVELTEQGSATIHFSTANIHPEFRLQICTSYVTCKGDCHPPKDHIVTHPQYHAQTFTAAVSKTAWTWLTSLLGGSAVIIIIGLVLATIVAMYVLTNQKHN.

The interval 1-33 (MFPFQPMYPMQPMPYRNPFAAPRRPWFPRTDPF) is necessary for nucleocapsid assembly and virus assembly. The interval 33 to 68 (FLAMQVQELTRSMANLTFKQRRDAPPEGPPAKKPKR) is host transcription inhibition. The Supraphysiological nuclear export signal signature appears at 41–48 (LTRSMANL). Residues 44 to 119 (SMANLTFKQR…KKPGKRQRMV (76 aa)) form a disordered region. Residues 64–68 (KKPKR) carry the Nuclear localization signal motif. Positions 80 to 92 (GKKKKNQGKKKAK) are enriched in basic residues. The segment at 91–127 (AKTGPPNPKAQSGNKKKPNKKPGKRQRMVMKLESDKT) is binding to the viral RNA. Position 93 is a phosphothreonine (Thr-93). Over residues 104–118 (NKKKPNKKPGKRQRM) the composition is skewed to basic residues. Positions 112–126 (PGKRQRMVMKLESDK) are ribosome-binding. The residue at position 124 (Ser-124) is a Phosphoserine. Residues 126–275 (KTFPIMLEGK…KYTPENCEQW (150 aa)) enclose the Peptidase S3 domain. Thr-127 carries the phosphothreonine modification. The Charge relay system role is filled by His-152. Positions 168–173 (KKASKY) are interaction with spike glycoprotein E2. Residues Asp-174 and Ser-226 each act as charge relay system in the active site. The interaction with spike glycoprotein E2 stretch occupies residues 260–264 (EKGVT). Residues 276–287 (SLVTTMCLLANV) are functions as an uncleaved signal peptide for the precursor of protein E3/E2. Residues 276-701 (SLVTTMCLLA…HYYHRYPMST (426 aa)) lie on the Extracellular side of the membrane. 7 disulfide bridges follow: Cys-282–Cys-291, Cys-353–Cys-457, Cys-356–Cys-361, Cys-424–Cys-438, Cys-485–Cys-600, Cys-534–Cys-560, and Cys-536–Cys-554. Asn-286 carries N-linked (GlcNAc...) asparagine; by host glycosylation. Asn-652 carries N-linked (GlcNAc...) asparagine; by host glycosylation. The chain crosses the membrane as a helical span at residues 702 to 722 (ILGLSICAAIVTVSVAASTWL). The Cytoplasmic segment spans residues 723–757 (FCKSRVSCLTPYRLTPNARMPLCLAVLCCARTARA). An interaction with the capsid protein region spans residues 725–729 (KSRVS). Residues Cys-730, Cys-750, and Cys-751 are each lipidated (S-palmitoyl cysteine; by host). The interval 730 to 750 (CLTPYRLTPNARMPLCLAVLC) is transient transmembrane before p62-6K protein processing. Cys-730 and Cys-751 are joined by a disulfide. Over 758 to 769 (ETTWESLDHLWN) the chain is Extracellular. The helical transmembrane segment at 770-790 (NNQQMFWIQLLIPLAALIVVT) threads the bilayer. Arg-791 is a topological domain (cytoplasmic). A helical membrane pass occupies residues 792-812 (LLKCVCCVVPFLVVAGAAGAG). Residues 813-1225 (AYEHATTMPS…SKTAWTWLTS (413 aa)) are Extracellular-facing. Intrachain disulfides connect Cys-862–Cys-927, Cys-875–Cys-907, Cys-876–Cys-909, and Cys-881–Cys-891. The tract at residues 897 to 914 (VYPFMWGGAYCFCDTENT) is E1 fusion peptide loop. N-linked (GlcNAc...) asparagine; by host glycosylation is found at Asn-947 and Asn-1083. Disulfide bonds link Cys-1072/Cys-1084, Cys-1114/Cys-1189, Cys-1119/Cys-1193, and Cys-1141/Cys-1183. The helical transmembrane segment at 1226–1246 (LLGGSAVIIIIGLVLATIVAM) threads the bilayer. Topologically, residues 1247–1255 (YVLTNQKHN) are cytoplasmic.

Homodimer. Homomultimer. Interacts with host karyopherin KPNA4; this interaction allows the nuclear import of the viral capsid protein. Interacts with spike glycoprotein E2. Interacts with host IRAK1; the interaction leads to inhibition of IRAK1-dependent signaling. Part of a tetrameric complex composed of host CRM1, host importin alpha/beta dimer and the viral capsid; this complex blocks the receptor-mediated transport through the nuclear pore. Interacts with host phosphatase PPP1CA; this interaction dephosphorylates the capsid protein, which increases its ability to bind to the viral genome. In terms of assembly, the precursor of protein E3/E2 and E1 form a heterodimer shortly after synthesis. As to quaternary structure, interacts with spike glycoprotein E2. The precursor of protein E3/E2 and E1 form a heterodimer shortly after synthesis. Processing of the precursor of protein E3/E2 into E2 and E3 results in a heterodimer of the spike glycoproteins E2 and E1. Spike at virion surface are constituted of three E2-E1 heterodimers. After target cell attachment and endocytosis, E1 change conformation to form homotrimers. Interacts with 6K protein. Interacts with host LDLRAD3; this interaction mediates viral entry to the host cell. Interacts with spike glycoprotein E1. Processing of the precursor of protein E3/E2 into E2 and E3 results in a heterodimer of the spike glycoproteins E2 and E1. Spike at virion surface are constituted of a trimer of E2-E1 heterodimers. Interacts with 6K protein. Interacts with host LDLRAD3; this interaction mediates viral entry to the host cell. In terms of assembly, oligomer. Interacts with spike glycoprotein E1. Interacts with spike glycoprotein E2. Post-translationally, structural polyprotein: Specific enzymatic cleavages in vivo yield mature proteins. Capsid protein is auto-cleaved during polyprotein translation, unmasking a signal peptide at the N-terminus of the precursor of E3/E2. The remaining polyprotein is then targeted to the host endoplasmic reticulum, where host signal peptidase cleaves it into pE2, 6K and E1 proteins. pE2 is further processed to mature E3 and E2 by host furin in trans-Golgi vesicle. In terms of processing, phosphorylated on serine and threonine residues. Palmitoylated via thioester bonds. These palmitoylations may induce disruption of the C-terminus transmembrane. This would result in the reorientation of E2 C-terminus from lumenal to cytoplasmic side. Post-translationally, N-glycosylated. In terms of processing, palmitoylated via thioester bonds.

It is found in the virion. It localises to the host cytoplasm. The protein resides in the host cell membrane. The protein localises to the host nucleus. Its subcellular location is the virion membrane. It is found in the host Golgi apparatus. It localises to the host trans-Golgi network. The protein resides in the host endoplasmic reticulum. The enzyme catalyses Autocatalytic release of the core protein from the N-terminus of the togavirus structural polyprotein by hydrolysis of a -Trp-|-Ser- bond.. Functionally, forms an icosahedral capsid with a T=4 symmetry composed of 240 copies of the capsid protein surrounded by a lipid membrane through which penetrate 80 spikes composed of trimers of E1-E2 heterodimers. The capsid protein binds to the viral RNA genome at a site adjacent to a ribosome binding site for viral genome translation following genome release. Possesses a protease activity that results in its autocatalytic cleavage from the nascent structural protein. Following its self-cleavage, the capsid protein transiently associates with ribosomes, and within several minutes the protein binds to viral RNA and rapidly assembles into icosahedric core particles. The resulting nucleocapsid eventually associates with the cytoplasmic domain of the spike glycoprotein E2 at the cell membrane, leading to budding and formation of mature virions. In case of infection, new virions attach to target cells and after clathrin-mediated endocytosis their membrane fuses with the host endosomal membrane. This leads to the release of the nucleocapsid into the cytoplasm, followed by an uncoating event necessary for the genomic RNA to become accessible. The uncoating might be triggered by the interaction of capsid proteins with ribosomes. Binding of ribosomes would release the genomic RNA since the same region is genomic RNA-binding and ribosome-binding. Specifically inhibits interleukin-1 receptor-associated kinase 1/IRAK1-dependent signaling during viral entry, representing a means by which the alphaviruses may evade innate immune detection and activation prior to viral gene expression. Inhibits host transcription. Forms a tetrameric complex with XPO1/CRM1 and the nuclear import receptor importin. This complex blocks the central channel of host nuclear pores thereby inhibiting the receptor-mediated nuclear transport and thus the host mRNA and rRNA transcription. The inhibition of transcription is linked to a cytopathic effect on the host cell. Provides the signal sequence for the translocation of the precursor of protein E3/E2 to the host endoplasmic reticulum. Furin-cleaved E3 remains associated with spike glycoprotein E1 and mediates pH protection of the latter during the transport via the secretory pathway. After virion release from the host cell, the assembly protein E3 is gradually released in the extracellular space. In terms of biological role, plays a role in viral attachment to target host cell, by binding to the cell receptor LDLRAD3. Synthesized as a p62 precursor which is processed by furin at the cell membrane just before virion budding, giving rise to E2-E1 heterodimer. The p62-E1 heterodimer is stable, whereas E2-E1 is unstable and dissociate at low pH. p62 is processed at the last step, presumably to avoid E1 fusion activation before its final export to cell surface. E2 C-terminus contains a transitory transmembrane that would be disrupted by palmitoylation, resulting in reorientation of the C-terminal tail from lumenal to cytoplasmic side. This step is critical since E2 C-terminus is involved in budding by interacting with capsid proteins. This release of E2 C-terminus in cytoplasm occurs lately in protein export, and precludes premature assembly of particles at the endoplasmic reticulum membrane. Its function is as follows. Acts as a viroporin that participates in virus glycoprotein processing and transport to the plasma membrane, cell permeabilization and budding of viral particles. Disrupts the calcium homeostasis of the cell, probably at the endoplasmic reticulum level. This leads to cytoplasmic calcium elevation. Because of its lipophilic properties, the 6K protein is postulated to influence the selection of lipids that interact with the transmembrane domains of the glycoproteins, which, in turn, affects the deformability of the bilayer required for the extreme curvature that occurs as budding proceeds. Present in low amount in virions, about 3% compared to viral glycoproteins. Functionally, class II viral fusion protein. Fusion activity is inactive as long as E1 is bound to E2 in mature virion. After virus attachment to cell receptor LDLRAD3 and endocytosis, acidification of the endosome induce dissociation of E1/E2 heterodimer and concomitant trimerization of the E1 subunits. This E1 trimer is fusion active, and promotes release of viral nucleocapsid in cytoplasm after endosome and viral membrane fusion. Efficient fusion requires the presence of cholesterol and sphingolipid in the target membrane. The sequence is that of Structural polyprotein from Venezuelan equine encephalitis virus (strain P676) (VEEV).